A 124-amino-acid polypeptide reads, in one-letter code: Splicing factor 3B subunit 6-like protein (124 aa).

Residues 16–29 form an interaction with pre-mRNA branch site region; it reads EVNRVLYVRNLPFN. The RRM domain occupies 19-94; the sequence is RVLYVRNLPF…RYLIVLYYQH (76 aa).

The protein localises to the nucleus. In terms of biological role, may be necessary for the splicing of pre-mRNA. The polypeptide is Splicing factor 3B subunit 6-like protein (Arabidopsis thaliana (Mouse-ear cress)).